Consider the following 147-residue polypeptide: Large ribosomal subunit protein uL15 (147 aa).

A compositionally biased stretch (basic residues) spans 1-15; sequence MTDRVKKTRKLRGHV. The interval 1-34 is disordered; it reads MTDRVKKTRKLRGHVSHGYGRVGKHRKHSGGRGL.

The protein belongs to the universal ribosomal protein uL15 family.

This chain is Large ribosomal subunit protein uL15 (RPL27A), found in Encephalitozoon cuniculi (strain GB-M1) (Microsporidian parasite).